The primary structure comprises 314 residues: MNAYLHCLSHTPLIGHFDPNQDVLDEVAEVVRAARARIEAFNPELVVLFAPDHYNGFFYDVMPPFCLGMEAEAIGDFGSLAGTLSVPKDVAEACAESVLTSGIDLAVSYRMQVDHGFAQPLDFLLGGLDKYPVLPVFVNCVAPPLPTFERVRLLGDAIGRFTRGLNKRVLFLGSGGLSHQPPVPELAKVDARMADRLMGSGRNLPPEERDARTQRVVVAAERFVENQNTLHPLNPKWDRYFLDVVEQDLLSQLDDLSNAHLSELAGKSTHEVKAWVAAFSALSAHGAYTATDRYYRPIPEWIAGFGSISAHTQR.

His-115 (proton donor) is an active-site residue. His-179 (proton acceptor) is an active-site residue.

The protein belongs to the LigB/MhpB extradiol dioxygenase family. In terms of assembly, homotetramer. The cofactor is Fe(2+).

It catalyses the reaction 3-(2,3-dihydroxyphenyl)propanoate + O2 = (2Z,4E)-2-hydroxy-6-oxonona-2,4-dienedioate + H(+). The catalysed reaction is (2E)-3-(2,3-dihydroxyphenyl)prop-2-enoate + O2 = (2Z,4E,7E)-2-hydroxy-6-oxonona-2,4,7-trienedioate + H(+). It functions in the pathway aromatic compound metabolism; 3-phenylpropanoate degradation. In terms of biological role, catalyzes the non-heme iron(II)-dependent oxidative cleavage of 2,3-dihydroxyphenylpropionic acid and 2,3-dihydroxicinnamic acid into 2-hydroxy-6-ketononadienedioate and 2-hydroxy-6-ketononatrienedioate, respectively. The sequence is that of 2,3-dihydroxyphenylpropionate/2,3-dihydroxicinnamic acid 1,2-dioxygenase 2 (mhpB2) from Pseudomonas putida (Arthrobacter siderocapsulatus).